The sequence spans 362 residues: Probable S-adenosylmethionine-dependent methyltransferase At5g37970 (362 aa).

Positions 19, 66, 71, 107, 136, and 137 each coordinate S-adenosyl-L-homocysteine. Positions 175, 261, and 263 each coordinate Mg(2+).

Belongs to the methyltransferase superfamily. Type-7 methyltransferase family. In terms of assembly, homodimer. Mg(2+) serves as cofactor.

This chain is Probable S-adenosylmethionine-dependent methyltransferase At5g37970, found in Arabidopsis thaliana (Mouse-ear cress).